The chain runs to 571 residues: Double-stranded RNA-binding protein Staufen homolog 2 (571 aa).

Residues 8–75 (TPMCLVNELA…ANKALTESTL (68 aa)) form the DRBM 1 domain. 2 positions are modified to phosphoserine: Pro-9 and Val-13. A Phosphothreonine modification is found at Arg-18. Ser-21 carries the post-translational modification Phosphoserine. Disordered stretches follow at residues 71–94 (TESTLPKPVQKPPKSNVNNNPGSI) and 178–203 (ALQNEPIPEKSPQNGESGKEMDDDKD). The span at 83–94 (PKSNVNNNPGSI) shows a compositional bias: polar residues. The region spanning 95–181 (TPTVELNGLA…AMKALQALQN (87 aa)) is the DRBM 2 domain. Ser-188 bears the Phosphoserine mark. The span at 194–203 (SGKEMDDDKD) shows a compositional bias: basic and acidic residues. 2 consecutive DRBM domains span residues 207–274 (SEIS…ELKK) and 307–375 (NPIS…QLGY). 2 short sequence motifs (nuclear localization signal) span residues 273–317 (KKLP…QIQQ) and 373–412 (LGYKASTSLQDQLDKTGENKGWSGPKPGFPEPANNTPKGI). Residues 381 to 571 (LQDQLDKTGE…QDCKKSKSVI (191 aa)) form a required for dendritic transport region. Residues 382-413 (QDQLDKTGENKGWSGPKPGFPEPANNTPKGIL) are disordered. Phosphoserine is present on residues Ser-395, Ser-416, Ser-426, Ser-440, Ser-456, and Ser-493. Residues 546–571 (LREKADNNQANPGSITQDCKKSKSVI) are disordered. Residues 552–562 (NNQANPGSITQ) are compositionally biased toward polar residues.

In terms of assembly, identified in a mRNP complex, at least composed of DHX9, DDX3X, ELAVL1, HNRNPU, IGF2BP1, ILF3, PABPC1, PCBP2, PTBP2, STAU1, STAU2, SYNCRIP and YBX1. Interacts with the exportin XPO5. This requires RNA and RAN bound to GTP. Interacts with microtubules. Isoform 2 and isoform 3 may also interact with ribosomes, and this association is independent of translation. Interacts with TRIM71 (via NHL repeats) in an RNA-dependent manner. In terms of tissue distribution, expressed in both somata and dendrites of hippocampal neurons.

It is found in the nucleus. The protein resides in the nucleolus. The protein localises to the cytoplasm. Its subcellular location is the endoplasmic reticulum. RNA-binding protein required for the microtubule-dependent transport of neuronal RNA from the cell body to the dendrite. As protein synthesis occurs within the dendrite, the localization of specific mRNAs to dendrites may be a prerequisite for neurite outgrowth and plasticity at sites distant from the cell body. The chain is Double-stranded RNA-binding protein Staufen homolog 2 (Stau2) from Rattus norvegicus (Rat).